Reading from the N-terminus, the 167-residue chain is 3-isopropylmalate dehydratase small subunit (167 aa).

It belongs to the LeuD family. LeuD type 2 subfamily. Heterodimer of LeuC and LeuD.

The catalysed reaction is (2R,3S)-3-isopropylmalate = (2S)-2-isopropylmalate. Its pathway is amino-acid biosynthesis; L-leucine biosynthesis; L-leucine from 3-methyl-2-oxobutanoate: step 2/4. Catalyzes the isomerization between 2-isopropylmalate and 3-isopropylmalate, via the formation of 2-isopropylmaleate. The chain is 3-isopropylmalate dehydratase small subunit from Wolinella succinogenes (strain ATCC 29543 / DSM 1740 / CCUG 13145 / JCM 31913 / LMG 7466 / NCTC 11488 / FDC 602W) (Vibrio succinogenes).